The chain runs to 102 residues: Large ribosomal subunit protein bL21 (102 aa).

This sequence belongs to the bacterial ribosomal protein bL21 family. In terms of assembly, part of the 50S ribosomal subunit. Contacts protein L20.

This protein binds to 23S rRNA in the presence of protein L20. The protein is Large ribosomal subunit protein bL21 of Geobacillus sp. (strain WCH70).